A 356-amino-acid chain; its full sequence is Alanine racemase (356 aa).

The Proton acceptor; specific for D-alanine role is filled by Lys-35. Position 35 is an N6-(pyridoxal phosphate)lysine (Lys-35). Arg-130 contacts substrate. Tyr-253 functions as the Proton acceptor; specific for L-alanine in the catalytic mechanism. Met-301 contributes to the substrate binding site.

This sequence belongs to the alanine racemase family. Pyridoxal 5'-phosphate is required as a cofactor.

The catalysed reaction is L-alanine = D-alanine. It participates in amino-acid biosynthesis; D-alanine biosynthesis; D-alanine from L-alanine: step 1/1. Its function is as follows. Catalyzes the interconversion of L-alanine and D-alanine. May also act on other amino acids. The chain is Alanine racemase (alr) from Erwinia tasmaniensis (strain DSM 17950 / CFBP 7177 / CIP 109463 / NCPPB 4357 / Et1/99).